The following is a 419-amino-acid chain: D(4) dopamine receptor (419 aa).

The Extracellular segment spans residues M1 to G29. An N-linked (GlcNAc...) asparagine glycan is attached at N3. A helical transmembrane segment spans residues L30–A50. The Cytoplasmic segment spans residues G51 to S71. The helical transmembrane segment at F72 to V92 threads the bilayer. Position 80 (D80) interacts with Na(+). At Y93–A110 the chain is on the extracellular side. C108 and C185 are joined by a disulfide. Residues L111–V131 form a helical membrane-spanning segment. D115 contacts (2R,3R)-nemonapride. S122 contributes to the Na(+) binding site. The Cytoplasmic segment spans residues D132–Q152. The chain crosses the membrane as a helical span at residues L153–G173. The Extracellular portion of the chain corresponds to L174 to Y192. The helical transmembrane segment at V193–W213 threads the bilayer. (2R,3R)-nemonapride is bound at residue S196. Topologically, residues A214 to R346 are cytoplasmic. Residues L230 to P264 form a disordered region. Over residues P238–P254 the composition is skewed to pro residues. One copy of the 1; approximate repeat lies at P249–P264. The tract at residues P249 to P312 is 4 X 16 AA approximate tandem repeats of [PA]-A-P-G-L-P-[PQR]-[DG]-P-C-G-P-D-C-A-P. 2 repeat units span residues P265–P280 and A281–P296. Residues P297–P312 form a 4; approximate repeat. The interval R317–K336 is disordered. Residues V347–I367 form a helical membrane-spanning segment. Residues T368–V382 are Extracellular-facing. A disulfide bond links C372 and C375. A helical transmembrane segment spans residues S383–F403. Residues N404–C419 lie on the Cytoplasmic side of the membrane. C419 carries the S-palmitoyl cysteine lipid modification.

This sequence belongs to the G-protein coupled receptor 1 family. In terms of assembly, forms homo- and heterooligomers with DRD2. D4.7 allele exhibits higher affinity for homodimers compared to DRD2 heterodimers, while alleles D42. and 4.4 have similar affinities for both. The interaction with DRD2 may modulate agonist-induced downstream signaling. Interacts with CLIC6. Interacts with GPRASP1. May interact with ADORA2A. Interacts with KLHL12. Post-translationally, polyubiquitinated by the BCR(KLHL12) E3 ubiquitin ligase complex: polyubiquitination does not lead to degradation of DRD4 protein. Palmitoylated. Palmitoylation of the C-terminal Cys is important for normal expression at the cell membrane. In terms of tissue distribution, highly expressed in retina. Detected at much lower levels in brain, in amygdala, thalamus, hypothalamus, cerebellum and pituitary.

The protein localises to the cell membrane. Its activity is regulated as follows. Signaling in response to agonists such as dopamine, epinephrine and norepinephrine is modulated by Na(+); lower Na(+) levels result in higher receptor activity (in vitro). In terms of biological role, dopamine receptor responsible for neuronal signaling in the mesolimbic system of the brain, an area of the brain that regulates emotion and complex behavior. Activated by dopamine, but also by epinephrine and norepinephrine, and by numerous synthetic agonists and drugs. Agonist binding triggers signaling via G proteins that inhibit adenylyl cyclase. Modulates the circadian rhythm of contrast sensitivity by regulating the rhythmic expression of NPAS2 in the retinal ganglion cells. This Homo sapiens (Human) protein is D(4) dopamine receptor (DRD4).